The following is a 401-amino-acid chain: Golgi membrane protein 1 (401 aa).

Met1 carries the N-acetylmethionine modification. Residues 1–12 (MMGLGNGRRSMK) are Cytoplasmic-facing. Residues 13–35 (SPPLVLAALVACIIVLGFNYWIA) form a helical; Signal-anchor for type II membrane protein membrane-spanning segment. At 36 to 401 (SSRSVDLQTR…DQREKRNHTL (366 aa)) the chain is on the lumenal side. Residues 40–205 (VDLQTRIMEL…QRQQLQALSE (166 aa)) are a coiled coil. The N-linked (GlcNAc...) (complex) asparagine glycan is linked to Asn109. The N-linked (GlcNAc...) asparagine glycan is linked to Asn144. Residues 178-401 (TKKGNEAVAS…DQREKRNHTL (224 aa)) form a disordered region. Position 187 is a phosphoserine (Ser187). Over residues 228–238 (LGNSKSQTPAP) the composition is skewed to polar residues. Basic and acidic residues-rich tracts occupy residues 244-255 (LDSKRQVEKEET) and 264-285 (EPQRDRLPQEPGREQVVEDRPV). Residues 286–295 (GGRGFGGAGE) show a composition bias toward gly residues. A compositionally biased stretch (polar residues) spans 298-312 (QTPQVQAALSVSQEN). At Ser309 the chain carries Phosphoserine; by FAM20C. The segment covering 350-360 (DYNMDENEAES) has biased composition (acidic residues). Residues 381 to 395 (EDQKRDTINLLDQRE) show a composition bias toward basic and acidic residues. The N-linked (GlcNAc...) asparagine glycan is linked to Asn398.

This sequence belongs to the GOLM family. In terms of assembly, interacts with DYM. Post-translationally, glycosylated. In terms of processing, phosphorylation sites are present in the extracellular medium. In terms of tissue distribution, widely expressed. Highly expressed in colon, prostate, trachea and stomach. Expressed at lower level in testis, muscle, lymphoid tissues, white blood cells and spleen. Predominantly expressed by cells of the epithelial lineage. Expressed at low level in normal liver. Expression significantly increases in virus (HBV, HCV) infected liver. Expression does not increase in liver disease due to non-viral causes (alcohol-induced liver disease, autoimmune hepatitis). Increased expression in hepatocytes appears to be a general feature of advanced liver disease. In liver tissue from patients with adult giant-cell hepatitis (GCH), it is strongly expressed in hepatocytes-derived syncytial giant cells. Constitutively expressed by biliary epithelial cells but not by hepatocytes.

It is found in the golgi apparatus. The protein resides in the cis-Golgi network membrane. Unknown. Cellular response protein to viral infection. This Homo sapiens (Human) protein is Golgi membrane protein 1 (GOLM1).